Consider the following 297-residue polypeptide: Homoserine kinase (297 aa).

Residue 84–94 (PLSKGFGSSAA) participates in ATP binding.

This sequence belongs to the GHMP kinase family. Homoserine kinase subfamily.

The protein resides in the cytoplasm. The catalysed reaction is L-homoserine + ATP = O-phospho-L-homoserine + ADP + H(+). The protein operates within amino-acid biosynthesis; L-threonine biosynthesis; L-threonine from L-aspartate: step 4/5. Catalyzes the ATP-dependent phosphorylation of L-homoserine to L-homoserine phosphate. This chain is Homoserine kinase, found in Shouchella clausii (strain KSM-K16) (Alkalihalobacillus clausii).